Consider the following 337-residue polypeptide: Holliday junction branch migration complex subunit RuvB (337 aa).

Residues 4–184 (ADRLIAPAAI…FGIVQRLEFY (181 aa)) are large ATPase domain (RuvB-L). ATP-binding positions include Ile-23, Arg-24, Gly-65, Lys-68, Thr-69, Thr-70, 131–133 (EDY), Arg-174, Tyr-184, and Arg-221. Position 69 (Thr-69) interacts with Mg(2+). Residues 185-255 (KVEDLAHIVG…IAAQALDMLD (71 aa)) are small ATPAse domain (RuvB-S). The head domain (RuvB-H) stretch occupies residues 258–337 (NAGFDYMDRK…FGLTTPERQG (80 aa)). Residues Arg-313 and Arg-318 each contribute to the DNA site.

This sequence belongs to the RuvB family. Homohexamer. Forms an RuvA(8)-RuvB(12)-Holliday junction (HJ) complex. HJ DNA is sandwiched between 2 RuvA tetramers; dsDNA enters through RuvA and exits via RuvB. An RuvB hexamer assembles on each DNA strand where it exits the tetramer. Each RuvB hexamer is contacted by two RuvA subunits (via domain III) on 2 adjacent RuvB subunits; this complex drives branch migration. In the full resolvosome a probable DNA-RuvA(4)-RuvB(12)-RuvC(2) complex forms which resolves the HJ.

It localises to the cytoplasm. It catalyses the reaction ATP + H2O = ADP + phosphate + H(+). Functionally, the RuvA-RuvB-RuvC complex processes Holliday junction (HJ) DNA during genetic recombination and DNA repair, while the RuvA-RuvB complex plays an important role in the rescue of blocked DNA replication forks via replication fork reversal (RFR). RuvA specifically binds to HJ cruciform DNA, conferring on it an open structure. The RuvB hexamer acts as an ATP-dependent pump, pulling dsDNA into and through the RuvAB complex. RuvB forms 2 homohexamers on either side of HJ DNA bound by 1 or 2 RuvA tetramers; 4 subunits per hexamer contact DNA at a time. Coordinated motions by a converter formed by DNA-disengaged RuvB subunits stimulates ATP hydrolysis and nucleotide exchange. Immobilization of the converter enables RuvB to convert the ATP-contained energy into a lever motion, pulling 2 nucleotides of DNA out of the RuvA tetramer per ATP hydrolyzed, thus driving DNA branch migration. The RuvB motors rotate together with the DNA substrate, which together with the progressing nucleotide cycle form the mechanistic basis for DNA recombination by continuous HJ branch migration. Branch migration allows RuvC to scan DNA until it finds its consensus sequence, where it cleaves and resolves cruciform DNA. The protein is Holliday junction branch migration complex subunit RuvB of Tolumonas auensis (strain DSM 9187 / NBRC 110442 / TA 4).